The sequence spans 251 residues: Hydroxyacylglutathione hydrolase (251 aa).

Zn(2+) is bound by residues histidine 53, histidine 55, aspartate 57, histidine 58, histidine 110, aspartate 127, and histidine 165.

The protein belongs to the metallo-beta-lactamase superfamily. Glyoxalase II family. As to quaternary structure, monomer. Zn(2+) is required as a cofactor.

The catalysed reaction is an S-(2-hydroxyacyl)glutathione + H2O = a 2-hydroxy carboxylate + glutathione + H(+). Its pathway is secondary metabolite metabolism; methylglyoxal degradation; (R)-lactate from methylglyoxal: step 2/2. Its function is as follows. Thiolesterase that catalyzes the hydrolysis of S-D-lactoyl-glutathione to form glutathione and D-lactic acid. This is Hydroxyacylglutathione hydrolase from Pectobacterium carotovorum subsp. carotovorum (strain PC1).